Here is a 67-residue protein sequence, read N- to C-terminus: Large ribosomal subunit protein bL31 (67 aa).

Zn(2+) is bound by residues Cys16, Cys18, Cys36, and Cys39.

It belongs to the bacterial ribosomal protein bL31 family. Type A subfamily. In terms of assembly, part of the 50S ribosomal subunit. Requires Zn(2+) as cofactor.

Binds the 23S rRNA. The protein is Large ribosomal subunit protein bL31 of Syntrophomonas wolfei subsp. wolfei (strain DSM 2245B / Goettingen).